The primary structure comprises 328 residues: 4-hydroxy-3-methylbut-2-enyl diphosphate reductase (328 aa).

C13 contributes to the [4Fe-4S] cluster binding site. Positions 41 and 75 each coordinate (2E)-4-hydroxy-3-methylbut-2-enyl diphosphate. The dimethylallyl diphosphate site is built by H41 and H75. Isopentenyl diphosphate contacts are provided by H41 and H75. A [4Fe-4S] cluster-binding site is contributed by C97. A (2E)-4-hydroxy-3-methylbut-2-enyl diphosphate-binding site is contributed by H125. H125 lines the dimethylallyl diphosphate pocket. H125 is a binding site for isopentenyl diphosphate. The active-site Proton donor is the E127. A (2E)-4-hydroxy-3-methylbut-2-enyl diphosphate-binding site is contributed by T168. C225 is a [4Fe-4S] cluster binding site. 4 residues coordinate (2E)-4-hydroxy-3-methylbut-2-enyl diphosphate: S253, S254, N255, and S302. The dimethylallyl diphosphate site is built by S253, S254, N255, and S302. Residues S253, S254, N255, and S302 each contribute to the isopentenyl diphosphate site.

The protein belongs to the IspH family. [4Fe-4S] cluster is required as a cofactor.

It carries out the reaction isopentenyl diphosphate + 2 oxidized [2Fe-2S]-[ferredoxin] + H2O = (2E)-4-hydroxy-3-methylbut-2-enyl diphosphate + 2 reduced [2Fe-2S]-[ferredoxin] + 2 H(+). The enzyme catalyses dimethylallyl diphosphate + 2 oxidized [2Fe-2S]-[ferredoxin] + H2O = (2E)-4-hydroxy-3-methylbut-2-enyl diphosphate + 2 reduced [2Fe-2S]-[ferredoxin] + 2 H(+). It participates in isoprenoid biosynthesis; dimethylallyl diphosphate biosynthesis; dimethylallyl diphosphate from (2E)-4-hydroxy-3-methylbutenyl diphosphate: step 1/1. The protein operates within isoprenoid biosynthesis; isopentenyl diphosphate biosynthesis via DXP pathway; isopentenyl diphosphate from 1-deoxy-D-xylulose 5-phosphate: step 6/6. Its function is as follows. Catalyzes the conversion of 1-hydroxy-2-methyl-2-(E)-butenyl 4-diphosphate (HMBPP) into a mixture of isopentenyl diphosphate (IPP) and dimethylallyl diphosphate (DMAPP). Acts in the terminal step of the DOXP/MEP pathway for isoprenoid precursor biosynthesis. In Chlorobium chlorochromatii (strain CaD3), this protein is 4-hydroxy-3-methylbut-2-enyl diphosphate reductase.